Reading from the N-terminus, the 260-residue chain is Electron transfer flavoprotein subunit beta (260 aa).

Belongs to the ETF beta-subunit/FixA family. As to quaternary structure, heterodimer of an alpha and a beta subunit. FAD is required as a cofactor. The cofactor is AMP.

Functionally, the electron transfer flavoprotein serves as a specific electron acceptor for other dehydrogenases. It transfers the electrons to the main respiratory chain via ETF-ubiquinone oxidoreductase (ETF dehydrogenase). The chain is Electron transfer flavoprotein subunit beta (etfB) from Thermoanaerobacterium thermosaccharolyticum (strain ATCC 7956 / DSM 571 / NCIMB 9385 / NCA 3814 / NCTC 13789 / WDCM 00135 / 2032) (Clostridium thermosaccharolyticum).